The following is a 146-amino-acid chain: Probable calcium-binding protein CML40 (146 aa).

The EF-hand 1 domain occupies 7 to 42; it reads NKRDEYQRVFSCFDKSHQGKVSVSTIERCVDAIKSG. A disordered region spans residues 44 to 65; that stretch reads RAVVDQEDTTNPNPEESTDDKS. In terms of domain architecture, EF-hand 2 spans 116 to 146; it reads KSLKDCEVMISQFDINRDGIINFDEFRAMMQ. The Ca(2+) site is built by aspartate 129, asparagine 131, aspartate 133, and glutamate 140.

Potential calcium sensor. The polypeptide is Probable calcium-binding protein CML40 (CML40) (Arabidopsis thaliana (Mouse-ear cress)).